Consider the following 349-residue polypeptide: Phosphate acetyltransferase (349 aa).

This sequence belongs to the phosphate acetyltransferase and butyryltransferase family.

The protein resides in the cytoplasm. The catalysed reaction is acetyl-CoA + phosphate = acetyl phosphate + CoA. Its pathway is metabolic intermediate biosynthesis; acetyl-CoA biosynthesis; acetyl-CoA from acetate: step 2/2. This Rickettsia typhi (strain ATCC VR-144 / Wilmington) protein is Phosphate acetyltransferase (pta).